The chain runs to 391 residues: Chorismate synthase (391 aa).

Arg48 serves as a coordination point for NADP(+). Residues 126–128 (RAS), Gly286, 301–305 (KPTSS), and Arg328 each bind FMN.

This sequence belongs to the chorismate synthase family. FMNH2 is required as a cofactor.

It carries out the reaction 5-O-(1-carboxyvinyl)-3-phosphoshikimate = chorismate + phosphate. It functions in the pathway metabolic intermediate biosynthesis; chorismate biosynthesis; chorismate from D-erythrose 4-phosphate and phosphoenolpyruvate: step 7/7. Catalyzes the anti-1,4-elimination of the C-3 phosphate and the C-6 proR hydrogen from 5-enolpyruvylshikimate-3-phosphate (EPSP) to yield chorismate, which is the branch point compound that serves as the starting substrate for the three terminal pathways of aromatic amino acid biosynthesis. This reaction introduces a second double bond into the aromatic ring system. The polypeptide is Chorismate synthase (Saccharolobus solfataricus (strain ATCC 35092 / DSM 1617 / JCM 11322 / P2) (Sulfolobus solfataricus)).